The primary structure comprises 476 residues: Proline--tRNA ligase 2 (476 aa).

Belongs to the class-II aminoacyl-tRNA synthetase family. ProS type 3 subfamily. As to quaternary structure, homodimer.

It is found in the cytoplasm. The enzyme catalyses tRNA(Pro) + L-proline + ATP = L-prolyl-tRNA(Pro) + AMP + diphosphate. Its function is as follows. Catalyzes the attachment of proline to tRNA(Pro) in a two-step reaction: proline is first activated by ATP to form Pro-AMP and then transferred to the acceptor end of tRNA(Pro). This is Proline--tRNA ligase 2 from Bacillus thuringiensis (strain Al Hakam).